The chain runs to 257 residues: ATP synthase delta chain, chloroplastic (257 aa).

The N-terminal 70 residues, 1-70 (MAALQNPVAL…PRGGALGTRM (70 aa)), are a transit peptide targeting the chloroplast.

The protein belongs to the ATPase delta chain family. F-type ATPases have 2 components, CF(1) - the catalytic core - and CF(0) - the membrane proton channel. CF(1) has five subunits: alpha(3), beta(3), gamma(1), delta(1), epsilon(1). CF(0) has three main subunits: a, b and c.

The protein localises to the plastid. It is found in the chloroplast thylakoid membrane. This protein seems to be part of the stalk that links CF(0) to CF(1). It either transmits conformational changes from CF(0) into CF(1) or is implicated in proton conduction. The chain is ATP synthase delta chain, chloroplastic (ATPD) from Spinacia oleracea (Spinach).